The chain runs to 332 residues: MGSSGSMVKPISGFLTALIQYPVPVVESRADIDQQIKQIIKTIHSTKAGYPGLELIVFPEYSTQGLNTKKWTTEEFLCTVPGPETDLFAEACKESEVYGVFSIMERNPDGGEPYNTAIIIDPQGEMILKYRKLNPWVPVEPWKAGDLGLPVCDGPGGSKLAVCICHDGMFPEVAREAAYKGANVLIRISGYSTQVSEQWMLTNRSNAWQNLMYTLSVNLAGYDGVFYYFGEGQVCNFDGTTLVQGHRNPWEIVTAEVYPELADQARLGWGLENNIYNLGSRGYVATPGGVKENPYTFVKDLAEGKYKVPWEDEIKVKDGTIYGYPVKKTIHS.

In terms of domain architecture, CN hydrolase spans 14 to 259 (FLTALIQYPV…WEIVTAEVYP (246 aa)). The Proton acceptor role is filled by Glu60. Lys132 functions as the Proton donor in the catalytic mechanism. Cys165 functions as the Nucleophile in the catalytic mechanism.

The protein belongs to the carbon-nitrogen hydrolase superfamily. Aliphatic amidase family.

The catalysed reaction is formamide + H2O = formate + NH4(+). Functionally, is an aliphatic amidase with a restricted substrate specificity, as it only hydrolyzes formamide. The protein is Formamidase of Bacillus thuringiensis (strain Al Hakam).